A 956-amino-acid chain; its full sequence is UvrABC system protein A (956 aa).

Residue 33 to 40 participates in ATP binding; sequence GLSGSGKS. The C4-type zinc finger occupies 252-279; that stretch reads CPYCGFSVGELEPRMFSFNSPFGACPTC. 2 ABC transporter domains span residues 309-587 and 607-936; these read WRPI…KNSI and GNGL…KYLK. 639–646 contacts ATP; that stretch reads GVSGSGKS. Residues 738–764 form a C4-type zinc finger; the sequence is CEACKGDGIIKIEMHFLPDVYVPCEVC.

It belongs to the ABC transporter superfamily. UvrA family. In terms of assembly, forms a heterotetramer with UvrB during the search for lesions.

Its subcellular location is the cytoplasm. The UvrABC repair system catalyzes the recognition and processing of DNA lesions. UvrA is an ATPase and a DNA-binding protein. A damage recognition complex composed of 2 UvrA and 2 UvrB subunits scans DNA for abnormalities. When the presence of a lesion has been verified by UvrB, the UvrA molecules dissociate. The protein is UvrABC system protein A of Listeria innocua serovar 6a (strain ATCC BAA-680 / CLIP 11262).